A 638-amino-acid polypeptide reads, in one-letter code: Exotoxin A (638 aa).

The N-terminal stretch at 1–25 is a signal peptide; it reads MHLTPHWIPLVASLGLLAGGSFASA. The tract at residues 26-277 is domain Ia (required for target cell recognition); it reads AEEAFDLWNE…VISHRLHFPE (252 aa). The interval 278-389 is II (required for translocation in target cell cytoplasm); sequence GGSLAALTAH…TGNDEAGAAS (112 aa). The cysteines at positions 290 and 312 are disulfide-linked. The interval 390 to 429 is domain Ib; sequence ADVVSLTCPVAAGECAGPADSGDALLERNYPTGAEFLGDG. Positions 430–638 are III (required for ADP-ribosyl activity); sequence GDISFSTRGT…PGKPPREDLK (209 aa). Residues 465–467, serine 474, 479–485, and glutamate 578 contribute to the NAD(+) site; these read HGT and GVRARSQ. Glutamate 578 is an active-site residue. The disordered stretch occupies residues 596–638; sequence IPTDPRNVGGDLDPSSIPDKEQAISALPDYASQPGKPPREDLK.

In terms of processing, the 8 cysteines participate in intrachain disulfide bonds.

The catalysed reaction is diphthamide-[translation elongation factor 2] + NAD(+) = N-(ADP-D-ribosyl)diphthamide-[translation elongation factor 2] + nicotinamide + H(+). Inhibited by 1,8-naphthalimide (NAP) as well as a number of poly(ADP-ribose) polymerase inhibitors and other compounds. Functionally, an NAD-dependent ADP-ribosyltransferase (ADPRT). Catalyzes the transfer of the ADP ribosyl moiety of oxidized NAD (NAD(+)) onto eukaryotic elongation factor 2 (eEF-2) thus arresting protein synthesis. Has an LD(50) of 65 ng/ml against the human lung epithelial cell line C38. The polypeptide is Exotoxin A (Pseudomonas aeruginosa (strain ATCC 15692 / DSM 22644 / CIP 104116 / JCM 14847 / LMG 12228 / 1C / PRS 101 / PAO1)).